The primary structure comprises 356 residues: Chorismate synthase (356 aa).

NADP(+) is bound at residue arginine 44. Residues 121 to 123 (HFS), glycine 278, 293 to 297 (KPTPS), and arginine 320 each bind FMN.

It belongs to the chorismate synthase family. The cofactor is FMNH2.

It catalyses the reaction 5-O-(1-carboxyvinyl)-3-phosphoshikimate = chorismate + phosphate. It functions in the pathway metabolic intermediate biosynthesis; chorismate biosynthesis; chorismate from D-erythrose 4-phosphate and phosphoenolpyruvate: step 7/7. Catalyzes the anti-1,4-elimination of the C-3 phosphate and the C-6 proR hydrogen from 5-enolpyruvylshikimate-3-phosphate (EPSP) to yield chorismate, which is the branch point compound that serves as the starting substrate for the three terminal pathways of aromatic amino acid biosynthesis. This reaction introduces a second double bond into the aromatic ring system. This Pyrococcus abyssi (strain GE5 / Orsay) protein is Chorismate synthase.